Here is a 306-residue protein sequence, read N- to C-terminus: 33 kDa chaperonin (306 aa).

2 disulfide bridges follow: C242–C244 and C275–C278.

The protein belongs to the HSP33 family. Post-translationally, under oxidizing conditions two disulfide bonds are formed involving the reactive cysteines. Under reducing conditions zinc is bound to the reactive cysteines and the protein is inactive.

The protein localises to the cytoplasm. Redox regulated molecular chaperone. Protects both thermally unfolding and oxidatively damaged proteins from irreversible aggregation. Plays an important role in the bacterial defense system toward oxidative stress. This chain is 33 kDa chaperonin, found in Gloeobacter violaceus (strain ATCC 29082 / PCC 7421).